A 207-amino-acid chain; its full sequence is Protein GET1 (207 aa).

Residues 1-4 (MPSL) lie on the Lumenal side of the membrane. A helical transmembrane segment spans residues 5–24 (LISVLFLHIAIYIINTIAAS). At 25–110 (TIDSLLWLIY…FFDVAVKALR (86 aa)) the chain is on the cytoplasmic side. A coiled-coil region spans residues 44-97 (IAREQHQMKLEVVQLKREMNATSSQDEFAKWAKLRRRHDKALEEYEVKNKQFSR). The chain crosses the membrane as a helical span at residues 111 to 131 (WAGTSGLIVFLQFWFSKTPIF). Residues 132–155 (TLPPSWIPWQVEWVLSFPRAPMGT) lie on the Lumenal side of the membrane. Residues 156 to 172 (VSIQVWGGACAVVVALI) traverse the membrane as a helical segment. Residues 173–207 (GEAIGATVRYLYASKDSMEAIKVGAGAVEKEKKRQ) lie on the Cytoplasmic side of the membrane.

It belongs to the WRB/GET1 family. As to quaternary structure, interacts with GET3.

It is found in the endoplasmic reticulum membrane. In terms of biological role, required for the post-translational delivery of tail-anchored (TA) proteins to the endoplasmic reticulum. Acts as a membrane receptor for soluble GET3, which recognizes and selectively binds the transmembrane domain of TA proteins in the cytosol. The protein is Protein GET1 of Paracoccidioides brasiliensis (strain Pb18).